Reading from the N-terminus, the 717-residue chain is MTKLAQWMFEQYVKDLNLKNRGSPSFRKWLTLQPSLLRYSGVMRANAFDILKYGYPMQQSGYTVATLEIHFKNIRSSFANIYWNRDSEEPEYVCCCATYQSHDGEYRYRFVWYQPFIEAYNAIEAALDPLETIILNLIAARDLDFVVHIFPYNKGHEDYLASTQLILKIFIATLLMDILRIKDNTLDVHLNSDYIIVMERLWPHIKDAIEHFFEAHKDLLGYLIAFRNGGNFAGSLRPSCGQKIVPLTIREALQMNDINLAVWREVFIMQECSDLVINGIAPCFPIFNTWTYLQGINQIFFENTSLQEKFKKDFIARELSKEIIKGQKTLNDKEFKKLSLHQIQYMESFLLMSDVAIMITTEYVGYTLQSLPGIISRSSYLSPIVKNILMDEDSFMSLLFDLCYGAYVLHKKENVIHADLHLNNMTYYHFNPTSFTDRNKPGKYTLKVKNPVIAFITGPKVETETYVFKHIDGFGCIIDFSRAIMGPNHAIKLERQYGLAFVNTFYRNQSEHILKVLRFYFPEMLTNRENEIQGVILSNFNFFFNSITAIDFYAIARNLRSMLSLDYLHTSEVKRNVEISQTFLDTCQFLEEKAVEFLFKNLHTVLSGKPVEKTAGDVLLPIVFKKFLYPNIPKNILRSFTVIDVYNYNNIKRYSGKAIQTFPPWAQTKEILTHAEGRTFEDIFPRGELVFKKAYAENNHLDKILQRIREQLANENL.

Belongs to the asfivirus C717R family.

The protein localises to the virion. This is an uncharacterized protein from Ornithodoros (relapsing fever ticks).